The following is a 105-amino-acid chain: Small ribosomal subunit protein uS10 (105 aa).

The protein belongs to the universal ribosomal protein uS10 family. In terms of assembly, part of the 30S ribosomal subunit.

In terms of biological role, involved in the binding of tRNA to the ribosomes. This chain is Small ribosomal subunit protein uS10, found in Rickettsia typhi (strain ATCC VR-144 / Wilmington).